We begin with the raw amino-acid sequence, 1427 residues long: DNA-directed RNA polymerase subunit beta' (1427 aa).

Residues Cys70, Cys72, Cys85, and Cys88 each coordinate Zn(2+). Mg(2+)-binding residues include Asp461, Asp463, and Asp465. Zn(2+)-binding residues include Cys810, Cys884, Cys891, and Cys894. 2 disordered regions span residues 1044–1065 and 1394–1427; these read QTDE…AGRG and PEAA…GDEA.

This sequence belongs to the RNA polymerase beta' chain family. In terms of assembly, the RNAP catalytic core consists of 2 alpha, 1 beta, 1 beta' and 1 omega subunit. When a sigma factor is associated with the core the holoenzyme is formed, which can initiate transcription. Requires Mg(2+) as cofactor. Zn(2+) serves as cofactor.

The catalysed reaction is RNA(n) + a ribonucleoside 5'-triphosphate = RNA(n+1) + diphosphate. Its function is as follows. DNA-dependent RNA polymerase catalyzes the transcription of DNA into RNA using the four ribonucleoside triphosphates as substrates. The sequence is that of DNA-directed RNA polymerase subunit beta' from Novosphingobium aromaticivorans (strain ATCC 700278 / DSM 12444 / CCUG 56034 / CIP 105152 / NBRC 16084 / F199).